Consider the following 367-residue polypeptide: Quinolinate synthase (367 aa).

Iminosuccinate is bound by residues H46 and S63. A [4Fe-4S] cluster-binding site is contributed by C110. Iminosuccinate contacts are provided by residues 141–143 (YVN) and S162. C229 is a binding site for [4Fe-4S] cluster. Residues 255-257 (HPE) and T272 each bind iminosuccinate. C319 is a [4Fe-4S] cluster binding site.

It belongs to the quinolinate synthase family. Type 3 subfamily. [4Fe-4S] cluster is required as a cofactor.

The protein localises to the cytoplasm. It carries out the reaction iminosuccinate + dihydroxyacetone phosphate = quinolinate + phosphate + 2 H2O + H(+). It participates in cofactor biosynthesis; NAD(+) biosynthesis; quinolinate from iminoaspartate: step 1/1. Catalyzes the condensation of iminoaspartate with dihydroxyacetone phosphate to form quinolinate. This Bacillus velezensis (strain DSM 23117 / BGSC 10A6 / LMG 26770 / FZB42) (Bacillus amyloliquefaciens subsp. plantarum) protein is Quinolinate synthase.